Here is a 90-residue protein sequence, read N- to C-terminus: UPF0367 protein PMT9312_0127 (90 aa).

The protein belongs to the UPF0367 family.

The polypeptide is UPF0367 protein PMT9312_0127 (Prochlorococcus marinus (strain MIT 9312)).